The chain runs to 181 residues: NADH-quinone oxidoreductase subunit I (181 aa).

2 4Fe-4S ferredoxin-type domains span residues 52–81 (TRDS…LKKG) and 91–120 (KFFR…LTPD). Residues C61, C64, C67, C71, C100, C103, C106, and C110 each coordinate [4Fe-4S] cluster.

It belongs to the complex I 23 kDa subunit family. In terms of assembly, NDH-1 is composed of 13 different subunits. Subunits NuoA, H, J, K, L, M, N constitute the membrane sector of the complex. It depends on [4Fe-4S] cluster as a cofactor.

The protein localises to the cell inner membrane. The enzyme catalyses a quinone + NADH + 5 H(+)(in) = a quinol + NAD(+) + 4 H(+)(out). Functionally, NDH-1 shuttles electrons from NADH, via FMN and iron-sulfur (Fe-S) centers, to quinones in the respiratory chain. The immediate electron acceptor for the enzyme in this species is believed to be ubiquinone. Couples the redox reaction to proton translocation (for every two electrons transferred, four hydrogen ions are translocated across the cytoplasmic membrane), and thus conserves the redox energy in a proton gradient. In Blochmanniella pennsylvanica (strain BPEN), this protein is NADH-quinone oxidoreductase subunit I.